The following is a 412-amino-acid chain: Alpha-2,8-sialyltransferase 8E (412 aa).

The Cytoplasmic portion of the chain corresponds to 1 to 16; sequence MRYADPSANRDLLGNR. The chain crosses the membrane as a helical; Signal-anchor for type II membrane protein span at residues 17–37; that stretch reads TLLFIFICAFALVTLLQQILY. Residues 38–412 lie on the Lumenal side of the membrane; it reads SKSYIKRGFQ…RVHTGTCNCC (375 aa). Residues Asn58, Asn64, Asn73, and Asn92 are each glycosylated (N-linked (GlcNAc...) asparagine). 2 cysteine pairs are disulfide-bonded: Cys200–Cys349 and Cys214–Cys409. Substrate contacts are provided by residues Asn228 and 250 to 252; that span reads NPS. N-linked (GlcNAc...) asparagine glycosylation occurs at Asn277. 336-338 serves as a coordination point for substrate; the sequence is STG. Residue His384 is the Proton donor/acceptor of the active site.

Belongs to the glycosyltransferase 29 family. Highly expressed in brain. Expressed at low levels in other tissues, including liver, testis, lung, placenta and spleen.

It localises to the golgi apparatus membrane. The catalysed reaction is a ganglioside GT1b (d18:1(4E)) + CMP-N-acetyl-beta-neuraminate = a ganglioside GQ1b (d18:1(4E)) + CMP + H(+). The enzyme catalyses a ganglioside GD3 (d18:1(4E)) + CMP-N-acetyl-beta-neuraminate = a ganglioside GT3 (d18:1(4E)) + CMP + H(+). It catalyses the reaction a ganglioside GD1a (d18:1(4E)) + CMP-N-acetyl-beta-neuraminate = a ganglioside GT1a (d18:1(4E)) + CMP + H(+). It carries out the reaction a ganglioside GM1b (d18:1(4E)) + CMP-N-acetyl-beta-neuraminate = a ganglioside GD1c (d18:1(4E)) + CMP + H(+). The catalysed reaction is a ganglioside GQ1c (d18:1(4E)) + CMP-N-acetyl-beta-neuraminate = a ganglioside GP1c (d18:1(4E)) + CMP + H(+). It functions in the pathway protein modification; protein glycosylation. Functionally, involved in the synthesis of gangliosides GD1c, GT1a, GQ1b, GP1c and GT3 from GD1a, GT1b, GM1b and GD3 respectively. The protein is Alpha-2,8-sialyltransferase 8E of Mus musculus (Mouse).